The following is a 238-amino-acid chain: Sugar fermentation stimulation protein homolog (238 aa).

Belongs to the SfsA family.

In Haemophilus influenzae (strain ATCC 51907 / DSM 11121 / KW20 / Rd), this protein is Sugar fermentation stimulation protein homolog.